The chain runs to 340 residues: GTPase Obg (340 aa).

Residues Met-1–Ile-158 form the Obg domain. Positions Ser-159–Lys-325 constitute an OBG-type G domain. Residues Gly-165–Ser-172, Phe-190–Glu-194, Asp-211–Gly-214, Asn-278–Asp-281, and Ser-306–Ile-308 contribute to the GTP site. Positions 172 and 192 each coordinate Mg(2+).

It belongs to the TRAFAC class OBG-HflX-like GTPase superfamily. OBG GTPase family. In terms of assembly, monomer. The cofactor is Mg(2+).

The protein localises to the cytoplasm. Its function is as follows. An essential GTPase which binds GTP, GDP and possibly (p)ppGpp with moderate affinity, with high nucleotide exchange rates and a fairly low GTP hydrolysis rate. Plays a role in control of the cell cycle, stress response, ribosome biogenesis and in those bacteria that undergo differentiation, in morphogenesis control. The polypeptide is GTPase Obg (Ehrlichia ruminantium (strain Gardel)).